Consider the following 305-residue polypeptide: Protoheme IX farnesyltransferase (305 aa).

The next 9 membrane-spanning stretches (helical) occupy residues 38–58 (FITT…SFLG), 60–80 (LDIV…SCAI), 110–130 (AYAF…MTTV), 131–151 (TSAV…TMWS), 161–181 (IGSV…TGTI), 185–205 (AWVL…SLAI), 227–247 (VTKR…FFLG), 249–269 (LGWP…VIGL), and 285–305 (FVYS…ITLF).

It belongs to the UbiA prenyltransferase family. Protoheme IX farnesyltransferase subfamily. Interacts with CtaA.

It is found in the cell membrane. The enzyme catalyses heme b + (2E,6E)-farnesyl diphosphate + H2O = Fe(II)-heme o + diphosphate. It participates in porphyrin-containing compound metabolism; heme O biosynthesis; heme O from protoheme: step 1/1. Functionally, converts heme B (protoheme IX) to heme O by substitution of the vinyl group on carbon 2 of heme B porphyrin ring with a hydroxyethyl farnesyl side group. The sequence is that of Protoheme IX farnesyltransferase from Bacillus pumilus (strain SAFR-032).